The primary structure comprises 315 residues: Ribosomal RNA small subunit methyltransferase H (315 aa).

Residues G35 to H37, D55, F79, D101, and Q108 contribute to the S-adenosyl-L-methionine site.

The protein belongs to the methyltransferase superfamily. RsmH family.

The protein resides in the cytoplasm. The catalysed reaction is cytidine(1402) in 16S rRNA + S-adenosyl-L-methionine = N(4)-methylcytidine(1402) in 16S rRNA + S-adenosyl-L-homocysteine + H(+). In terms of biological role, specifically methylates the N4 position of cytidine in position 1402 (C1402) of 16S rRNA. In Sodalis glossinidius (strain morsitans), this protein is Ribosomal RNA small subunit methyltransferase H.